The chain runs to 267 residues: Tryptophan synthase alpha chain (267 aa).

Catalysis depends on proton acceptor residues E49 and D60.

It belongs to the TrpA family. In terms of assembly, tetramer of two alpha and two beta chains.

It catalyses the reaction (1S,2R)-1-C-(indol-3-yl)glycerol 3-phosphate + L-serine = D-glyceraldehyde 3-phosphate + L-tryptophan + H2O. The protein operates within amino-acid biosynthesis; L-tryptophan biosynthesis; L-tryptophan from chorismate: step 5/5. Functionally, the alpha subunit is responsible for the aldol cleavage of indoleglycerol phosphate to indole and glyceraldehyde 3-phosphate. In Acinetobacter baylyi (strain ATCC 33305 / BD413 / ADP1), this protein is Tryptophan synthase alpha chain.